Here is a 592-residue protein sequence, read N- to C-terminus: Alanine aminotransferase, mitochondrial (592 aa).

The N-terminal 64 residues, 1–64 (MLSLSAKNHF…RKVRPVLQRH (64 aa)), are a transit peptide targeting the mitochondrion. A Phosphoserine modification is found at Ser-77. Pyridoxal 5'-phosphate is bound by residues Ala-258, Ser-259, Tyr-284, Asn-340, and Ser-409. Lys-412 is subject to N6-(pyridoxal phosphate)lysine. Residue Arg-421 coordinates pyridoxal 5'-phosphate.

The protein belongs to the class-I pyridoxal-phosphate-dependent aminotransferase family. Alanine aminotransferase subfamily. Homodimer. It depends on pyridoxal 5'-phosphate as a cofactor.

It localises to the mitochondrion matrix. It catalyses the reaction L-alanine + 2-oxoglutarate = pyruvate + L-glutamate. It functions in the pathway amino-acid degradation; L-alanine degradation via transaminase pathway; pyruvate from L-alanine: step 1/1. In terms of biological role, alanine aminotransferase involved in both alanine biosynthesis and utilization. Under respiratory conditions, constitutes the sole pathway for alanine biosynthesis and catabolism. Under fermentative conditions, it plays a catabolic role and alanine is mainly synthesized through an alternative pathway. This is Alanine aminotransferase, mitochondrial (ALT1) from Saccharomyces cerevisiae (strain ATCC 204508 / S288c) (Baker's yeast).